A 177-amino-acid chain; its full sequence is R-phycoerythrin beta chain (177 aa).

Cys50 and Cys61 together coordinate phycourobilin. N4-methylasparagine is present on Asn72. 2 residues coordinate (2R,3E)-phycoerythrobilin: Cys82 and Cys158.

It belongs to the phycobiliprotein family. In terms of assembly, heterodimer of an alpha and a beta chain. Contains two covalently linked phycoerythrobilin chromophores and one covalently linked phycourobilin chromophore.

The protein localises to the plastid. It is found in the chloroplast thylakoid membrane. Light-harvesting photosynthetic bile pigment-protein from the phycobiliprotein complex. This is R-phycoerythrin beta chain (cpeB) from Lophosiphonia boldii (Red alga).